A 124-amino-acid polypeptide reads, in one-letter code: Glycine cleavage system H protein (124 aa).

Positions 22-104 (LVITGITDHA…YGKGWIYKIK (83 aa)) constitute a Lipoyl-binding domain. K63 is modified (N6-lipoyllysine).

This sequence belongs to the GcvH family. In terms of assembly, the glycine cleavage system is composed of four proteins: P, T, L and H. The cofactor is (R)-lipoate.

Functionally, the glycine cleavage system catalyzes the degradation of glycine. The H protein shuttles the methylamine group of glycine from the P protein to the T protein. This is Glycine cleavage system H protein from Acinetobacter baumannii (strain SDF).